Reading from the N-terminus, the 197-residue chain is Dephospho-CoA kinase (197 aa).

In terms of domain architecture, DPCK spans 2-197; the sequence is IIGLTGGIAS…GAIKDLANLV (196 aa). ATP is bound at residue 10–15; it reads ASGKST.

This sequence belongs to the CoaE family.

It localises to the cytoplasm. It carries out the reaction 3'-dephospho-CoA + ATP = ADP + CoA + H(+). It functions in the pathway cofactor biosynthesis; coenzyme A biosynthesis; CoA from (R)-pantothenate: step 5/5. Functionally, catalyzes the phosphorylation of the 3'-hydroxyl group of dephosphocoenzyme A to form coenzyme A. The polypeptide is Dephospho-CoA kinase (Streptococcus thermophilus (strain CNRZ 1066)).